The primary structure comprises 367 residues: MSLYGLFTLATSYLPSVGGGAALAAKAQLGKARSLYVPDLFAGILSGEPTRNPHEEEVGRASEEWTKKLVKMDKRTAKILTKANFAYLVSLAAPLADEEAFRMGVDWCIWAFVFDDQFDEGPMRDKGIEAAREIIDMLATQDDTCALVDPVVHPLQYMFQSVWQRFKARNPSPGLERRWKYTHKRCLFAILKQVDATQRKITLDVDLDDYMETRRHSIGAYSLFAVVEWAHAIKAPEEAMNHPSVQTCERVAADLTWLVNDVLSYKKDLAFGVEHNLTRLLMRQGLTEQGAMDKLGQLMESNQRDWEDAIAELPHWEDEETNKEVRRYLDACAAVGRANLHWSFKSGRYLNAEQGRKVRETRIMDLP.

Positions 1 to 24 are cleaved as a signal peptide; that stretch reads MSLYGLFTLATSYLPSVGGGAALA. Mg(2+) is bound by residues D115, N260, and S264. The short motif at 115-119 is the DDXXD motif element; it reads DDQFD. The N-linked (GlcNAc...) asparagine glycan is linked to N276.

The protein belongs to the terpene synthase family. Requires Mg(2+) as cofactor.

It catalyses the reaction (2E,6E,10E)-geranylgeranyl diphosphate = cycloaraneosene + diphosphate. Its pathway is antibiotic biosynthesis. Cycloaraneosene synthase; part of the gene cluster that mediates the biosynthesis of sordarin and hypoxysordarin, glycoside antibiotics with a unique tetracyclic diterpene aglycone structure. First, the geranylgeranyl diphosphate synthase sdnC constructs GGDP from farnesyl diphosphate and isopentenyl diphosphate. The diterpene cyclase sdnA then catalyzes the cyclization of GGDP to afford cycloaraneosene. Cycloaraneosene is then hydroxylated four times by the putative cytochrome P450 monooxygenases sdnB, sdnE, sdnF and sdnH to give a hydroxylated cycloaraneosene derivative such as cycloaraneosene-8,9,13,19-tetraol. Although the order of the hydroxylations is unclear, at least C8, C9 and C13 of the cycloaraneosene skeleton are hydroxylated before the sordaricin formation. Dehydration of the 13-hydroxy group of the hydroxylated cycloaraneosene derivative might be catalyzed by an unassigned hypothetical protein such as sdnG and sdnP to construct the cyclopentadiene moiety. The FAD-dependent oxidoreductase sdnN is proposed to catalyze the oxidation at C9 of the hydroxylated cycloaraneosene derivative and also catalyze the Baeyer-Villiger oxidation to give the lactone intermediate. The presumed lactone intermediate would be hydrolyzed to give an acrolein moiety and a carboxylate moiety. Then, [4+2]cycloaddition would occur between the acrolein moiety and the cyclopentadiene moiety to give sordaricin. SdnN might also be involved in the [4+2]cycloaddition after the hypothesized oxidation to accommodate the oxidized product and prompt the [4+2]cycloaddition. GDP-6-deoxy-D-altrose may be biosynthesized from GDP-D-mannose by the putative GDP-mannose-4,6-dehydratase sdnI and the short-chain dehydrogenase sdnK. The glycosyltransferase sdnJ catalyzes the attachment of 6-deoxy-D-altrose onto the 19-hydroxy group of sordaricin to give 4'-O-demethylsordarin. The methyltransferase sdnD would complete the biosynthesis of sordarin. Sordarin can be further modified into hypoxysordarin. The unique acyl chain at the 3'-hydroxy group of hypoxysordarin would be constructed by an iterative type I PKS sdnO and the trans-acting polyketide methyltransferase sdnL. SdnL would be responsible for the introduction of an alpha-methyl group of the polyketide chain. Alternatively, the beta-lactamase-like protein sdnR might be responsible for the cleavage and transfer of the polyketide chain from the PKS sdnO to sordarin. Two putative cytochrome P450 monooxygenases, sdnQ and sdnT, might catalyze the epoxidations of the polyketide chain to complete the biosynthesis of hypoxysordarin. Transcriptional regulators sdnM and sdnS are presumably encoded for the transcriptional regulation of the expression of the sdn gene cluster. This Sordaria araneosa (Pleurage araneosa) protein is Cycloaraneosene synthase sdnA.